A 191-amino-acid polypeptide reads, in one-letter code: Cathelicidin-related peptide Oh-Cath (191 aa).

A signal peptide spans 1–22 (MEGFFWKTLLVVGALAIGGTSS). Residues 23 to 161 (LPHKPLTYEE…DQPRRVKRFK (139 aa)) constitute a propeptide that is removed on maturation. 2 disulfides stabilise this stretch: C81-C92 and C103-C120. Over residues 125–151 (EEEEQKQEEGNEEEKEVEKEEKEEDEK) the composition is skewed to acidic residues. The segment at 125-154 (EEEEQKQEEGNEEEKEVEKEEKEEDEKDQP) is disordered.

It belongs to the cathelicidin family. In terms of tissue distribution, expressed by the venom gland.

It is found in the secreted. Its subcellular location is the target cell membrane. Potent antimicrobial peptide against Gram-negative (MIC=0.25 ug/ml against E.coli ATCC 25922, MIC=0.5 ug/ml against P.aeruginosa) and Gram-positive bacteria (MIC=64 ug/ml against E.faecalis, MIC=64 ug/ml against S.aureus). Adopts an amphipathic alpha helical conformation, that may allow to partition into the target membrane. Low hemolytic activities have been observed on mammalian cells. The sequence is that of Cathelicidin-related peptide Oh-Cath from Ophiophagus hannah (King cobra).